The following is a 161-amino-acid chain: Peroxynitrite isomerase (161 aa).

A GXWXGXG motif is present at residues 17–23 (GSWVGRG). Residue H152 coordinates heme b.

The protein belongs to the nitrobindin family. As to quaternary structure, homodimer. The cofactor is heme b.

It carries out the reaction peroxynitrite = nitrate. It functions in the pathway nitrogen metabolism. Heme-binding protein able to scavenge peroxynitrite and to protect free L-tyrosine against peroxynitrite-mediated nitration, by acting as a peroxynitrite isomerase that converts peroxynitrite to nitrate. Therefore, this protein likely plays a role in peroxynitrite sensing and in the detoxification of reactive nitrogen and oxygen species (RNS and ROS, respectively). Is able to bind nitric oxide (NO) in vitro, but may act as a sensor of peroxynitrite levels in vivo. The polypeptide is Peroxynitrite isomerase (Mycobacterium leprae (strain TN)).